A 412-amino-acid chain; its full sequence is CHRNA7-FAM7A fusion protein (412 aa).

Helical transmembrane passes span 144 to 164 (GLNL…VFLL), 172 to 192 (ISLG…VAEI), 205 to 225 (QYFA…VIVL), 240 to 254 (WTRV…WFLR), and 380 to 400 (LCLM…LMSA).

The protein belongs to the ligand-gated ion channel (TC 1.A.9) family. As to expression, expressed in hippocampus.

The protein resides in the membrane. This chain is CHRNA7-FAM7A fusion protein (CHRFAM7A), found in Homo sapiens (Human).